The primary structure comprises 95 residues: Aspartyl/glutamyl-tRNA(Asn/Gln) amidotransferase subunit C (95 aa).

Belongs to the GatC family. Heterotrimer of A, B and C subunits.

It carries out the reaction L-glutamyl-tRNA(Gln) + L-glutamine + ATP + H2O = L-glutaminyl-tRNA(Gln) + L-glutamate + ADP + phosphate + H(+). It catalyses the reaction L-aspartyl-tRNA(Asn) + L-glutamine + ATP + H2O = L-asparaginyl-tRNA(Asn) + L-glutamate + ADP + phosphate + 2 H(+). In terms of biological role, allows the formation of correctly charged Asn-tRNA(Asn) or Gln-tRNA(Gln) through the transamidation of misacylated Asp-tRNA(Asn) or Glu-tRNA(Gln) in organisms which lack either or both of asparaginyl-tRNA or glutaminyl-tRNA synthetases. The reaction takes place in the presence of glutamine and ATP through an activated phospho-Asp-tRNA(Asn) or phospho-Glu-tRNA(Gln). The polypeptide is Aspartyl/glutamyl-tRNA(Asn/Gln) amidotransferase subunit C (Nitrosomonas europaea (strain ATCC 19718 / CIP 103999 / KCTC 2705 / NBRC 14298)).